We begin with the raw amino-acid sequence, 285 residues long: Cytochrome c1 (285 aa).

The first 22 residues, Met-1–Ala-22, serve as a signal peptide directing secretion. Heme c is bound by residues Cys-58, Cys-61, His-62, and Met-207. Residues Ala-251–Thr-269 form a helical membrane-spanning segment.

The main subunits of complex b-c1 are: cytochrome b, cytochrome c1 and the Rieske protein. In terms of processing, binds 1 heme c group covalently per subunit.

It is found in the cell membrane. Functionally, component of the ubiquinol-cytochrome c reductase complex (complex III or cytochrome b-c1 complex), which is a respiratory chain that generates an electrochemical potential coupled to ATP synthesis. c1 functions as an electron donor to cytochrome c. The protein is Cytochrome c1 (petC) of Cereibacter sphaeroides (Rhodobacter sphaeroides).